The sequence spans 83 residues: Calsensin (83 aa).

EF-hand domains follow at residues lysine 4 to tyrosine 39 and lysine 46 to glutamine 81. Ca(2+)-binding residues include aspartate 17, asparagine 19, aspartate 21, tyrosine 23, glutamate 28, aspartate 59, asparagine 61, aspartate 63, lysine 65, and glutamate 70.

Selectively expressed in a small group of neurons.

The protein localises to the cytoplasm. Its function is as follows. May function as a trigger protein which interacts with a larger protein. May mediate calcium-dependent signal transduction events in the growth cones and axons of a small group of sensory neurons which fasciculate in a single axon tract. The polypeptide is Calsensin (Haemopis marmorata (Green horse leech)).